Consider the following 79-residue polypeptide: Bacteriochlorophyll c-binding protein (79 aa).

A bacteriochlorophyll c is bound at residue His25.

Belongs to the BChl C/E-binding protein family.

Its subcellular location is the chlorosome. The protein resides in the chlorosome envelope. In terms of biological role, component of the photosynthetic apparatus. The light harvesting B740 complex binds bacteriochlorophyll c. This Chlorobaculum tepidum (strain ATCC 49652 / DSM 12025 / NBRC 103806 / TLS) (Chlorobium tepidum) protein is Bacteriochlorophyll c-binding protein (csmA).